Here is a 422-residue protein sequence, read N- to C-terminus: MRQLCRGRVLGISVAIAHGVFSGSLNILLKFLISRYQFSFLTLVQCLTSSTAALSLELLRRLGLIAVPPFGLSLARSFAGVAVLSTLQSSLTLWSLRGLSLPMYVVFKRCLPLVTMLIGVLVLKNGAPSPGVLAAVLITTCGAALAGAGDLTGDPIGYVTGVLAVLVHAAYLVLIQKASADTEHGPLTAQYVIAVSATPLLVICSFASTDSIHAWTFPGWKDPAMVSIFVACILIGCAMNFTTLHCTYINSAVTTSFVGVVKSIATITVGMVAFSDVEPTSLFIAGVVVNTLGSIIYCVAKFLETRRQSNYEDLESQAEGEERQPSGDQLPFVMEELPAKSGNSEPESAEGAGDSVQQGGQESRGSIRGISLAARSSRAEGHSDEVGRRSLKDTYLEVWRLVRGTKYMKKDYLMENEALPSP.

Helical transmembrane passes span 9–29 (VLGISVAIAHGVFSGSLNILL), 38–58 (FSFLTLVQCLTSSTAALSLEL), 64–84 (LIAVPPFGLSLARSFAGVAVL), 103–123 (MYVVFKRCLPLVTMLIGVLVL), 131–151 (GVLAAVLITTCGAALAGAGDL), 155–175 (PIGYVTGVLAVLVHAAYLVLI), 187–207 (LTAQYVIAVSATPLLVICSFA), 224–244 (AMVSIFVACILIGCAMNFTTL), 257–277 (FVGVVKSIATITVGMVAFSDV), and 280–300 (TSLFIAGVVVNTLGSIIYCVA). The disordered stretch occupies residues 339–365 (AKSGNSEPESAEGAGDSVQQGGQESRG). A compositionally biased stretch (polar residues) spans 355–364 (SVQQGGQESR).

This sequence belongs to the TPT transporter family. SLC35D subfamily. As to quaternary structure, could interact with ATG14, BECN1 and PIK3C3 that form the PI3KC3-C1/AIC/autophagy initiation complex; enhancing the formation of the AIC and promoting autophagy. As to expression, expressed in brain. Expressed in subsets of dopaminergic neurons. Expressed in maturing megakaryocytes.

It localises to the cytoplasmic vesicle. The protein resides in the secretory vesicle. Its subcellular location is the synaptic vesicle membrane. The protein localises to the early endosome membrane. It is found in the endoplasmic reticulum membrane. It catalyses the reaction UDP-alpha-D-glucose(in) = UDP-alpha-D-glucose(out). Its activity is regulated as follows. Inhibited by proton uncouplers that directly abolish the proton electrochemical gradient. Functionally, probable UDP-glucose transmembrane transporter involved in UDP-glucose transport from the cytosol to the lumen of synaptic vesicles. It is involved in platelet dense granules maturation. Alternatively, could function as a molecular adapter enhancing the formation of the PI3KC3-C1/AIC/autophagy initiation complex to promote autophagy in dopaminergic neurons. Could also regulate the plasma membrane localization of the D(1A) dopamine receptor/DRD1 and dopamine signaling. This chain is Solute carrier family 35 member D3, found in Mus musculus (Mouse).